The sequence spans 109 residues: A-type ATP synthase subunit F (109 aa).

This sequence belongs to the V-ATPase F subunit family. In terms of assembly, has multiple subunits with at least A(3), B(3), C, D, E, F, H, I and proteolipid K(x).

The protein resides in the cell membrane. Component of the A-type ATP synthase that produces ATP from ADP in the presence of a proton gradient across the membrane. The chain is A-type ATP synthase subunit F from Haloquadratum walsbyi (strain DSM 16790 / HBSQ001).